Consider the following 314-residue polypeptide: Polyadenylate-binding protein-interacting protein 8 (314 aa).

A disordered region spans residues 1-47 (MAAITEMATDSNDVINDGGTGDGIEKSTDSKPEIESDDLKPKSKPEY). The span at 23 to 47 (GIEKSTDSKPEIESDDLKPKSKPEY) shows a compositional bias: basic and acidic residues. The short motif at 59–69 (KLNPEAKEFFP) is the PAM2-like element. Positions 99-112 (RRRRNNYNQGRRVR) match the Bipartite nuclear localization signal motif. RRM domains follow at residues 128–203 (RTVY…PSKT) and 225–301 (RTIY…PSKT).

As to quaternary structure, interacts with MPC. As to expression, expressed in cauline leaves, stems, rosette leaves, immature siliques and primary inflorescences but at a low level.

It localises to the nucleus. This is Polyadenylate-binding protein-interacting protein 8 (CID8) from Arabidopsis thaliana (Mouse-ear cress).